Here is a 36-residue protein sequence, read N- to C-terminus: Photosystem I reaction center subunit VIII (36 aa).

Residues 4 to 24 (FSLPSILVPLVGLVLPAIAMA) form a helical membrane-spanning segment.

This sequence belongs to the PsaI family.

It is found in the plastid. The protein resides in the chloroplast thylakoid membrane. May help in the organization of the PsaL subunit. The chain is Photosystem I reaction center subunit VIII from Piper cenocladum (Ant piper).